A 207-amino-acid chain; its full sequence is Large ribosomal subunit protein uL4 (207 aa).

The tract at residues 49-78 (HAVKNRSAVSGGGRKPWRQKGTGRARQGSI) is disordered.

The protein belongs to the universal ribosomal protein uL4 family. Part of the 50S ribosomal subunit.

Its function is as follows. One of the primary rRNA binding proteins, this protein initially binds near the 5'-end of the 23S rRNA. It is important during the early stages of 50S assembly. It makes multiple contacts with different domains of the 23S rRNA in the assembled 50S subunit and ribosome. In terms of biological role, forms part of the polypeptide exit tunnel. The sequence is that of Large ribosomal subunit protein uL4 from Streptococcus uberis (strain ATCC BAA-854 / 0140J).